The primary structure comprises 288 residues: Ion-translocating oxidoreductase complex subunit D (288 aa).

The next 9 membrane-spanning stretches (helical) occupy residues 26-46 (IVAL…AALG), 47-67 (NIIA…KAFN), 80-100 (LGLL…IFIG), 101-121 (GAFA…YTFH), 126-146 (AWVF…IPIL), 159-179 (GFLT…LILV), 200-220 (VLGD…VFFI), 235-255 (IVYG…SGNY), and 256-276 (VWGT…IELK).

Belongs to the NqrB/RnfD family. As to quaternary structure, the Rnf complex is probably composed of eight subunits, including RnfA, RnfB, RnfC, RnfD, RnfE and RnfG. FMN serves as cofactor.

The protein localises to the cell membrane. Functionally, part of a membrane-bound complex that couples electron transfer with translocation of ions across the membrane. Catalyzes Na(+) transport, most probably coupled to electron transfer from reduced ferredoxin to methanophenazine and heterodisulfide reductase. Involved in heterodisulfide reduction during methanogenesis from acetate. The sequence is that of Ion-translocating oxidoreductase complex subunit D from Methanosarcina acetivorans (strain ATCC 35395 / DSM 2834 / JCM 12185 / C2A).